The sequence spans 256 residues: Small ribosomal subunit protein uS2 (256 aa).

It belongs to the universal ribosomal protein uS2 family.

The chain is Small ribosomal subunit protein uS2 from Geotalea uraniireducens (strain Rf4) (Geobacter uraniireducens).